The primary structure comprises 66 residues: Large ribosomal subunit protein uL29 (66 aa).

Belongs to the universal ribosomal protein uL29 family.

This chain is Large ribosomal subunit protein uL29, found in Francisella philomiragia subsp. philomiragia (strain ATCC 25017 / CCUG 19701 / FSC 153 / O#319-036).